Consider the following 424-residue polypeptide: CinA-like protein (424 aa).

This sequence belongs to the CinA family.

The protein is CinA-like protein of Shewanella putrefaciens (strain CN-32 / ATCC BAA-453).